The sequence spans 290 residues: Pantothenate synthetase (290 aa).

ATP is bound at residue Met-30–His-37. The Proton donor role is filled by His-37. (R)-pantoate is bound at residue Gln-61. Gln-61 serves as a coordination point for beta-alanine. Gly-147–Asp-150 serves as a coordination point for ATP. Gln-153 lines the (R)-pantoate pocket. ATP-binding positions include Val-176 and Lys-184–Arg-187.

This sequence belongs to the pantothenate synthetase family. In terms of assembly, homodimer.

The protein localises to the cytoplasm. It catalyses the reaction (R)-pantoate + beta-alanine + ATP = (R)-pantothenate + AMP + diphosphate + H(+). It participates in cofactor biosynthesis; (R)-pantothenate biosynthesis; (R)-pantothenate from (R)-pantoate and beta-alanine: step 1/1. Its function is as follows. Catalyzes the condensation of pantoate with beta-alanine in an ATP-dependent reaction via a pantoyl-adenylate intermediate. The sequence is that of Pantothenate synthetase from Chlorobium chlorochromatii (strain CaD3).